Reading from the N-terminus, the 465-residue chain is Putative subtilisin-like proteinase 1 (465 aa).

An N-terminal signal peptide occupies residues 1–17 (MILAIISLSVVICREVS). The Inhibitor I9 domain maps to 19-90 (YIVMFDQDPS…VKMVVKDSPV (72 aa)). Residues 115-447 (PWGLARVGGS…PSLFNANKKK (333 aa)) form the Peptidase S8 domain. Catalysis depends on charge relay system residues aspartate 148 and histidine 180. Residues cysteine 329 and cysteine 360 are joined by a disulfide bond. Catalysis depends on serine 386, which acts as the Charge relay system.

It belongs to the peptidase S8 family.

It localises to the secreted. Its subcellular location is the extracellular space. May be involved in the degradation of proteins for nutrient acquisition or possess a regulatory function by proteolytic activation of proproteins. The sequence is that of Putative subtilisin-like proteinase 1 (SPL1) from Encephalitozoon cuniculi (strain GB-M1) (Microsporidian parasite).